A 474-amino-acid polypeptide reads, in one-letter code: Glutamate--tRNA ligase (474 aa).

Residues 10–20 (PSPTGYLHIGG) carry the 'HIGH' region motif. 4 residues coordinate Zn(2+): Cys-107, Cys-109, Cys-134, and Asp-136. Residues 244–248 (RLSKR) carry the 'KMSKS' region motif. Lys-247 lines the ATP pocket.

The protein belongs to the class-I aminoacyl-tRNA synthetase family. Glutamate--tRNA ligase type 1 subfamily. Monomer. It depends on Zn(2+) as a cofactor.

The protein resides in the cytoplasm. It carries out the reaction tRNA(Glu) + L-glutamate + ATP = L-glutamyl-tRNA(Glu) + AMP + diphosphate. Catalyzes the attachment of glutamate to tRNA(Glu) in a two-step reaction: glutamate is first activated by ATP to form Glu-AMP and then transferred to the acceptor end of tRNA(Glu). The protein is Glutamate--tRNA ligase of Anaeromyxobacter dehalogenans (strain 2CP-C).